Consider the following 393-residue polypeptide: 4-hydroxyphenylpyruvate dioxygenase (393 aa).

N-acetylthreonine is present on Thr-2. VOC domains are found at residues 18 to 149 (HFHS…LVEK) and 180 to 338 (MIDH…IFTK). Lys-132 carries the N6-succinyllysine modification. His-183 provides a ligand contact to Fe cation. Residues Ser-211, Ser-226, and Ser-250 each carry the phosphoserine modification. His-266 and Glu-349 together coordinate Fe cation.

Belongs to the 4HPPD family. Homodimer. Fe cation serves as cofactor.

The protein localises to the cytoplasm. It localises to the endoplasmic reticulum membrane. Its subcellular location is the golgi apparatus membrane. The catalysed reaction is 3-(4-hydroxyphenyl)pyruvate + O2 = homogentisate + CO2. Its pathway is amino-acid degradation; L-phenylalanine degradation; acetoacetate and fumarate from L-phenylalanine: step 3/6. In terms of biological role, catalyzes the conversion of 4-hydroxyphenylpyruvic acid to homogentisic acid, one of the steps in tyrosine catabolism. The protein is 4-hydroxyphenylpyruvate dioxygenase (HPD) of Homo sapiens (Human).